The following is a 354-amino-acid chain: Probable L-ascorbate-6-phosphate lactonase UlaG (354 aa).

This sequence belongs to the UlaG family. Requires a divalent metal cation as cofactor.

It is found in the cytoplasm. It carries out the reaction L-ascorbate 6-phosphate + H2O = 3-dehydro-L-gulonate 6-phosphate. It participates in cofactor degradation; L-ascorbate degradation; D-xylulose 5-phosphate from L-ascorbate: step 1/4. In terms of biological role, probably catalyzes the hydrolysis of L-ascorbate-6-P into 3-keto-L-gulonate-6-P. Is essential for L-ascorbate utilization under anaerobic conditions. This chain is Probable L-ascorbate-6-phosphate lactonase UlaG, found in Salmonella choleraesuis (strain SC-B67).